The following is a 1697-amino-acid chain: MNVQAHMSGQVSNQGTMSQQNGNSQMQNLVGGGSAPATGAGLGPSRVSPVDNDILKLRQAMRIRIFNILQQKQPSPADEASKAKYMDVARRLEEGLFKIANTKEDYVNPSTLEPRLASLIKGRQLNNYNQRHANSSSVGTMIPTPGLQHSGGNPNLMITSSGDATMAGSNNITTSAMNTGNLLNSGGMLGGNLSNGYQHSSSNFGLGSGGNMSSMSSQRNTGQMMPTPGFVNSSTNNNSNNGQSYLSVEASNNSGGFSTAPMMVPQTQQQQLRQDIGGQNSRMLQNHGSQMGVGLRPGMQQKLSNVSNSSINGGVGMNAKSVDSGTSYTNPIRNSQQAYDNLQRSGMQGDGYGTNNSDPFGSGNLYGAVTSVGMMTNTQNANTASFQAVSRTSSSLSHQQQQFQQQPNRFQQQPNQFHQQQQQFLHQQQLKQQSQQQQRFISHDAFGQNNVASDMVTHVKHEPGMENPSESIHSQTPEQFQLSQFQNQYQNNAEDRHAGSQILPVTSQSDMCTSVPQNSQQIQQMLHPHSMASDSVNGFSNLSVGVKTESGMRGHWQSQSQEHTQMSNSMSNERHIQEDFRQRMSGTDEAQPNNMSGGSIIGQNRVSTTSESLNPQNPTATTCRNGNGNRDPRFKNQQKWLLFLRHARHCKAPEGKCPDRNCVTVQKLWKHMDSCAAPQCSYPRCLPTKTLINHHRSCKEPNCPVCIPVKAYLQQQANARSLARLKNETDAARSVNGGGISSDAVQTSAGAKSCTSPGADISGHLQPSLKRLKVEQSSQPVDVETESCKSSVVSVTEAQSSQYAERKDHKHSDVRAPSKYFEVKAEVSDFSVQTRPGFKDTKIGIAENIPKQRPVSQPDKQDLSDVSPMQETTKVEKEPESLKKENLAESTEHTSKSGKPEIKGVSLTELFTPEQVREHIRGLRQWVGQSKAKAEKNQAMEHSMSENSCQLCAVEKLTFEPPPIYCTPCGARIKRNAMYYTVGAGDTRHYFCIPCYNESRGDTILAEGTPMPKARLEKKKNDEETEEWWVQCDKCEAWQHQICALFNGRRNDGGQAEYTCPYCFIAEVEQSKRKPLPQSAVLGAKDLPRTILSDHIEQRLFKRLKQERTERARAQGKSYDEIPTAESLVIRVVSSVDKKLEVKPRFLEIFREDSYPTEFAYKSKVVLLFQKIEGVEVCLFGMYVQEFGSECAFPNQRRVYLSYLDSVKYFRPEVRSYNGEALRTFVYHEILIGYLEYCKLRGFTSCYIWACPPLKGEDYILYCHPEIQKTPKSDKLREWYLAMLRKASKEGIVAETINLYDHFFMQTGECRAKVTAARLPYFDGDYWPGAAEDLIYQMSQEEDGRKGNKKGMLKKTITKRALKASGQTDLSGNASKDLLLMHRLGETIHPMKEDFIMVHLQPSCTHCCILMVSGNRWVCSQCKHFQICDKCYEAEQRREDRERHPVNFKDKHALYPVEIMDIPADTRDKDEILESEFFDTRQAFLSLCQGNHYQYDTLRRAKHSSMMVLYHLHNPTAPAFVTTCNACHLDIETGQGWRCEVCPDYDVCNACFSRDGGVNHPHKLTNHPSLADQNAQNKEARQLRVLQLRKMLDLLVHASQCRSAHCQYPNCRKVKGLFRHGINCKVRASGGCVLCKKMWYLLQLHARACKESECHVPRCRDLKEHLRRLQQQSDSRRRAAVMEMMRQRAAEVAGGSG.

The segment covering 1–16 (MNVQAHMSGQVSNQGT) has biased composition (polar residues). Disordered stretches follow at residues 1-45 (MNVQ…LGPS), 202-221 (SNFG…QRNT), 385-439 (SFQA…QQQR), 555-574 (HWQS…SNER), 583-631 (RMSG…GNRD), and 843-901 (IGIA…GKPE). Composition is skewed to low complexity over residues 17-28 (MSQQNGNSQMQN) and 202-217 (SNFG…SMSS). A compositionally biased stretch (polar residues) spans 385–398 (SFQAVSRTSSSLSH). Residues 399–439 (QQQQFQQQPNRFQQQPNQFHQQQQQFLHQQQLKQQSQQQQR) are compositionally biased toward low complexity. Composition is skewed to polar residues over residues 556–571 (WQSQ…NSMS) and 584–628 (MSGT…NGNG). The TAZ-type 1 zinc finger occupies 629–709 (NRDPRFKNQQ…EPNCPVCIPV (81 aa)). A compositionally biased stretch (basic and acidic residues) spans 873 to 901 (TKVEKEPESLKKENLAESTEHTSKSGKPE). A PHD-type zinc finger spans residues 989–1066 (HYFCIPCYNE…EYTCPYCFIA (78 aa)). The CBP/p300-type HAT domain maps to 1081-1517 (VLGAKDLPRT…VLYHLHNPTA (437 aa)). Residues 1204–1206 (LDS), 1223–1224 (RT), and W1279 each bind acetyl-CoA. ZZ-type zinc fingers lie at residues 1399 to 1462 (HLQP…IMDI) and 1519 to 1572 (AFVT…SLAD). C1404, C1407, C1419, C1422, C1428, C1431, H1444, H1452, C1524, C1527, C1539, C1542, C1548, C1551, H1560, and H1562 together coordinate Zn(2+). The segment at 1579 to 1662 (EARQLRVLQL…ECHVPRCRDL (84 aa)) adopts a TAZ-type 2 zinc-finger fold.

In terms of tissue distribution, rosette leaves, stems and flowers.

It is found in the nucleus. The enzyme catalyses L-lysyl-[protein] + acetyl-CoA = N(6)-acetyl-L-lysyl-[protein] + CoA + H(+). Its function is as follows. Acetyltransferase enzyme. Acetylates histones, giving a specific tag for transcriptional activation. In Arabidopsis thaliana (Mouse-ear cress), this protein is Histone acetyltransferase HAC1 (HAC1).